Consider the following 236-residue polypeptide: Urease accessory protein UreF (236 aa).

This sequence belongs to the UreF family. As to quaternary structure, ureD, UreF and UreG form a complex that acts as a GTP-hydrolysis-dependent molecular chaperone, activating the urease apoprotein by helping to assemble the nickel containing metallocenter of UreC. The UreE protein probably delivers the nickel.

The protein resides in the cytoplasm. In terms of biological role, required for maturation of urease via the functional incorporation of the urease nickel metallocenter. This chain is Urease accessory protein UreF, found in Synechocystis sp. (strain ATCC 27184 / PCC 6803 / Kazusa).